The chain runs to 138 residues: Cysteine desulfuration protein SufE (138 aa).

C51 serves as the catalytic Cysteine persulfide intermediate.

Belongs to the SufE family. As to quaternary structure, homodimer. Interacts with SufS.

It is found in the cytoplasm. It functions in the pathway cofactor biosynthesis; iron-sulfur cluster biosynthesis. Participates in cysteine desulfuration mediated by SufS. Cysteine desulfuration mobilizes sulfur from L-cysteine to yield L-alanine and constitutes an essential step in sulfur metabolism for biosynthesis of a variety of sulfur-containing biomolecules. Functions as a sulfur acceptor for SufS, by mediating the direct transfer of the sulfur atom from the S-sulfanylcysteine of SufS, an intermediate product of cysteine desulfuration process. This chain is Cysteine desulfuration protein SufE, found in Klebsiella pneumoniae subsp. pneumoniae (strain ATCC 700721 / MGH 78578).